We begin with the raw amino-acid sequence, 105 residues long: Ribosomal silencing factor RsfS (105 aa).

Belongs to the Iojap/RsfS family. As to quaternary structure, interacts with ribosomal protein uL14 (rplN).

The protein resides in the cytoplasm. Functionally, functions as a ribosomal silencing factor. Interacts with ribosomal protein uL14 (rplN), blocking formation of intersubunit bridge B8. Prevents association of the 30S and 50S ribosomal subunits and the formation of functional ribosomes, thus repressing translation. The sequence is that of Ribosomal silencing factor RsfS from Escherichia coli O6:H1 (strain CFT073 / ATCC 700928 / UPEC).